The sequence spans 355 residues: Septin-2B (355 aa).

The Septin-type G domain occupies 33-305 (KGFEFTLMVV…ENFRSERLKK (273 aa)). The interval 43-50 (GESGLGKS) is G1 motif. Residues 43 to 50 (GESGLGKS), Thr77, Gly103, 182 to 190 (KADTLTLRE), Gly240, and Arg255 each bind GTP. A G3 motif region spans residues 100–103 (DTPG). Positions 181–184 (AKAD) are G4 motif. Residues 259 to 269 (WGVVEVENPEH) form an important for dimerization region.

It belongs to the TRAFAC class TrmE-Era-EngA-EngB-Septin-like GTPase superfamily. Septin GTPase family. In terms of assembly, septins polymerize into heterooligomeric protein complexes that form filaments, and associate with cellular membranes, actin filaments and microtubules. GTPase activity is required for filament formation. Can form heterooligomers with other family members and form filaments. Interacts with wdpcp.

It localises to the cytoplasm. The protein localises to the cytoskeleton. It is found in the spindle. The protein resides in the cleavage furrow. Its subcellular location is the midbody. It localises to the cell cortex. The protein localises to the cell projection. It is found in the cilium membrane. Functionally, filament-forming cytoskeletal GTPase. Required for normal organization of the actin cytoskeleton. Plays a role in the biogenesis of polarized columnar-shaped epithelium. Required for the progression through mitosis through regulation of chromosome congression. During anaphase, may be required for chromosome segregation and spindle elongation. Plays a role in ciliogenesis and collective cell movements including convergent extension during gastrulation. In cilia, required for the integrity of the diffusion barrier at the base of the primary cilium that prevents diffusion of transmembrane proteins between the cilia and plasma membranes. Controls cell shape and not polarization of cells during convergent extension. The polypeptide is Septin-2B (sept2-B) (Xenopus tropicalis (Western clawed frog)).